A 534-amino-acid polypeptide reads, in one-letter code: Serine protease vicPa (534 aa).

The signal sequence occupies residues M1–G17. N-linked (GlcNAc...) asparagine glycosylation is found at N65 and N126. The Charge relay system role is filled by S174. N-linked (GlcNAc...) asparagine glycosylation is found at N297, N416, and N436. D450 (charge relay system) is an active-site residue.

Belongs to the peptidase S28 family.

Its pathway is mycotoxin biosynthesis. In terms of biological role, serine protease, part of the gene cluster that mediates the biosynthesis of the secondary metabolite victorin, the molecular basis for Victoria blight of oats. Within the pathway, vicPa and vicPb are probably involved in the processing of the vicA1 and vicA2 precursors. The pathway starts with the processing of the precursor vicA1 by several endopeptidases including kexin proteases as well as the cluster-specific S28 family peptidases vicPa and vicPb to produce 7 identical copies of the hexapeptide Gly-Leu-Lys-Leu-Ala-Phe. After being excised from the precursor peptide, the core peptides are cyclized and modified post-translationally by enzymes encoded within the gene cluster. The ustYa family oxidase vicYb is required for the formation of the macrocycle in victorin and the copper amine oxidases (CAOs) vicK1 and vicK2 are responsible for converting victorin to the active form by oxidizing the N-terminal glycyl residue in the peptides to glyoxylate. Relaxed substrate specificity of enzymes in the victorin biosynthetic pathway results in a metabolic grid that produces a set of analogs including victorinines B, C, E or HV-toxin M. The protein is Serine protease vicPa of Bipolaris victoriae (strain FI3) (Victoria blight of oats agent).